Consider the following 573-residue polypeptide: Acyl-coenzyme A synthetase ACSM1, mitochondrial (573 aa).

The transit peptide at 1–35 directs the protein to the mitochondrion; sequence MQWLKSFQICKVLQGFSLSPTQLHRRLFSRVGAPR. Lys81 carries the post-translational modification N6-succinyllysine. The residue at position 142 (Lys142) is an N6-acetyllysine; alternate. At Lys142 the chain carries N6-succinyllysine; alternate. At Lys179 the chain carries N6-succinyllysine. Lys200 is subject to N6-acetyllysine; alternate. Position 200 is an N6-succinyllysine; alternate (Lys200). Position 210 is an N6-acetyllysine (Lys210). 222–230 contributes to the ATP binding site; it reads TSGTTGYPK. Lys233 and Lys324 each carry N6-succinyllysine. 2 positions are modified to N6-acetyllysine; alternate: Lys352 and Lys387. Lys352 and Lys387 each carry N6-succinyllysine; alternate. 2 residues coordinate ATP: Asp448 and Arg463. Lys501 is subject to N6-succinyllysine. The residue at position 527 (Lys527) is an N6-acetyllysine. Lys534 carries the post-translational modification N6-acetyllysine; alternate. Lys534 carries the post-translational modification N6-succinyllysine; alternate. An N6-acetyllysine modification is found at Lys545. Lys559 serves as a coordination point for ATP.

The protein belongs to the ATP-dependent AMP-binding enzyme family. Monomer. Mg(2+) serves as cofactor. Requires Mn(2+) as cofactor. In terms of tissue distribution, highly expressed in liver and kidney.

Its subcellular location is the mitochondrion matrix. The protein localises to the mitochondrion. The enzyme catalyses a medium-chain fatty acid + ATP + CoA = a medium-chain fatty acyl-CoA + AMP + diphosphate. The catalysed reaction is benzoate + ATP + CoA = benzoyl-CoA + AMP + diphosphate. It catalyses the reaction (R)-lipoate + GTP + H(+) = (R)-lipoyl-GMP + diphosphate. It carries out the reaction octanoate + ATP + CoA = octanoyl-CoA + AMP + diphosphate. The enzyme catalyses decanoate + ATP + CoA = decanoyl-CoA + AMP + diphosphate. The catalysed reaction is dodecanoate + ATP + CoA = dodecanoyl-CoA + AMP + diphosphate. It catalyses the reaction tetradecanoate + ATP + CoA = tetradecanoyl-CoA + AMP + diphosphate. It carries out the reaction hexanoate + ATP + CoA = hexanoyl-CoA + AMP + diphosphate. The enzyme catalyses butanoate + ATP + CoA = butanoyl-CoA + AMP + diphosphate. The catalysed reaction is hexadecanoate + ATP + CoA = hexadecanoyl-CoA + AMP + diphosphate. Its function is as follows. Catalyzes the activation of fatty acids by CoA to produce an acyl-CoA, the first step in fatty acid metabolism. Capable of activating medium-chain fatty acids (e.g. butyric (C4) to decanoic (C10) acids), and certain carboxylate-containing xenobiotics, e.g. benzoate. Also catalyzes the activation of lipoate to lipoyl-nucleoside monophosphate. Activates lipoate with GTP at a 1000-fold higher rate than with ATP and activates both (R)- and (S)-lipoate to the respective lipoyl-GMP, with a preference for (R)-lipoate. The sequence is that of Acyl-coenzyme A synthetase ACSM1, mitochondrial (Acsm1) from Mus musculus (Mouse).